Reading from the N-terminus, the 345-residue chain is uncharacterized protein (345 aa).

This sequence belongs to the proline racemase family.

This is an uncharacterized protein from Bacillus anthracis.